The chain runs to 344 residues: MWGIHHARLHTTLKTQQWLPLGSRILIALSGGQDSVCLTRLLLDLQPHWQWSLVAVHCDHRWRADSTANANFVQQLAQKWHLPCEVVSAPDLPKTEAAARSWRYQVFESVAKALDCTHVVTAHTQSDRAESLLLHLLRGTSPDGLATLLPSRSLGAIQLVRPLLGMTRAQTAAFCQAYGLPIWQDETNHNLEYRRNRLRLELIPYLQQHFNPNVEEALAQTAELLASDRAYFEAEVERLAPTVLREHPPALDRLRLREFPLALQRRLIQCFLRQHLKRGLNFRVIEAVRALMTTGNGSQTASLPGGQHLRVCGRWIELVRPMPPPPAPVPPDPGERSPPPSPLY.

ATP is bound at residue 30 to 35 (SGGQDS). A disordered region spans residues 323 to 344 (PPPPAPVPPDPGERSPPPSPLY).

This sequence belongs to the tRNA(Ile)-lysidine synthase family.

The protein localises to the cytoplasm. The enzyme catalyses cytidine(34) in tRNA(Ile2) + L-lysine + ATP = lysidine(34) in tRNA(Ile2) + AMP + diphosphate + H(+). In terms of biological role, ligates lysine onto the cytidine present at position 34 of the AUA codon-specific tRNA(Ile) that contains the anticodon CAU, in an ATP-dependent manner. Cytidine is converted to lysidine, thus changing the amino acid specificity of the tRNA from methionine to isoleucine. The protein is tRNA(Ile)-lysidine synthase of Thermosynechococcus vestitus (strain NIES-2133 / IAM M-273 / BP-1).